A 725-amino-acid chain; its full sequence is Probable ATP-dependent RNA helicase DDX4 (725 aa).

Positions 1-251 (MGDEDWEAEI…GPKVTYIPPP (251 aa)) are disordered. Polar residues predominate over residues 28 to 43 (SGENGDNFNRTPTSSS). Residues 70 to 79 (DAGESNKRDN) show a composition bias toward basic and acidic residues. Composition is skewed to low complexity over residues 143–156 (SGPS…SFRG) and 196–206 (GDTSQSRSGSG). Residues serine 223 and serine 227 each carry the phosphoserine modification. The tract at residues 229-248 (KSEAEGGESSDTQGPKVTYI) is interaction with RANBP9. A Q motif motif is present at residues 289-317 (LTFEEANLCQTLNNNIAKAGYTKLTPVQK). Residues 320–503 (IPIILAGRDL…AEFLKSNYLF (184 aa)) form the Helicase ATP-binding domain. Residue 333 to 340 (AQTGSGKT) participates in ATP binding. A DEAD box motif is present at residues 447 to 450 (DEAD). The Helicase C-terminal domain occupies 531–676 (KLVEILRNIG…DVPAWLEEIA (146 aa)). The disordered stretch occupies residues 702 to 725 (KSSLNTAGFSSSQAPNPVDDESWD). Positions 703–716 (SSLNTAGFSSSQAP) are enriched in polar residues. Phosphoserine is present on serine 723.

Belongs to the DEAD box helicase family. DDX4/VASA subfamily. As to quaternary structure, found in a mRNP complex, at least composed of TDRD1, TDRD6, TDRD7 and DDX4. Interacts with RANBP9. Interacts with RANBP10. Interacts with PIWIL2 and MAEL. Interacts with BMAL1 and CLOCK. Interacts with Tex19.1 and, probably, Tex19.2. Interacts with RBM46.

Its subcellular location is the cytoplasm. It localises to the perinuclear region. The catalysed reaction is ATP + H2O = ADP + phosphate + H(+). Its function is as follows. ATP-dependent RNA helicase required during spermatogenesis to repress transposable elements and preventing their mobilization, which is essential for the germline integrity. Acts via the piRNA metabolic process, which mediates the repression of transposable elements during meiosis by forming complexes composed of piRNAs and Piwi proteins and governs the methylation and subsequent repression of transposons. Involved in the secondary piRNAs metabolic process, the production of piRNAs in fetal male germ cells through a ping-pong amplification cycle. Required for PIWIL2 slicing-triggered piRNA biogenesis: helicase activity enables utilization of one of the slice cleavage fragments generated by PIWIL2 and processing these pre-piRNAs into piRNAs. This is Probable ATP-dependent RNA helicase DDX4 (DDX4) from Macaca fascicularis (Crab-eating macaque).